Reading from the N-terminus, the 328-residue chain is Olfactory receptor 4A16 (328 aa).

Residues 1–23 (MRPSSNVTEFVLLGLTQDPDVKK) lie on the Extracellular side of the membrane. N6 carries N-linked (GlcNAc...) asparagine glycosylation. Residues 24–47 (TLFVMFLLIYIVTMVGNLLIWVTT) form a helical membrane-spanning segment. The Cytoplasmic segment spans residues 48–55 (IGSPSLGS). A helical membrane pass occupies residues 56-77 (LMYFFLAYLSLMDAIYSTAMSP). At 78–98 (KLMIDLLCDKIAISLSACMGQ) the chain is on the extracellular side. Cysteines 95 and 187 form a disulfide. The chain crosses the membrane as a helical span at residues 99-118 (LFIEHLLGGAEVFLLVVMAY). Over 119–137 (DRYVAISKPLHYLNIMNRL) the chain is Cytoplasmic. Residues 138 to 156 (VCILLLVVAMIGGFVHSVV) traverse the membrane as a helical segment. Residues 157–193 (QIVFLYSLPICGPNVIDHSVCDMYPLLELLCLDTYFI) lie on the Extracellular side of the membrane. A helical membrane pass occupies residues 194–217 (GLTVVANGGIICMVIFTFLLISCG). Topologically, residues 218–233 (VILNFLKTYSQEERHK) are cytoplasmic. A helical membrane pass occupies residues 234–256 (ALPTCISHIIVVALVFVPCIFMY). Residues 257 to 267 (VRPVSNFPFDK) lie on the Extracellular side of the membrane. A helical membrane pass occupies residues 268–287 (LMTVFYSIITLMLNPLIYSL). Residues 288–328 (RQSEMKNAMKNLWCEKLSIVRKRVSPTLNIFIPSSKATNRR) lie on the Cytoplasmic side of the membrane.

This sequence belongs to the G-protein coupled receptor 1 family.

It localises to the cell membrane. Functionally, odorant receptor. The protein is Olfactory receptor 4A16 (OR4A16) of Homo sapiens (Human).